The chain runs to 148 residues: 3-dehydroquinate dehydratase (148 aa).

Residue Y23 is the Proton acceptor of the active site. 3 residues coordinate substrate: N74, H80, and D87. Catalysis depends on H100, which acts as the Proton donor. Residues 101–102 (IS) and R111 contribute to the substrate site.

Belongs to the type-II 3-dehydroquinase family. Homododecamer.

It carries out the reaction 3-dehydroquinate = 3-dehydroshikimate + H2O. It participates in metabolic intermediate biosynthesis; chorismate biosynthesis; chorismate from D-erythrose 4-phosphate and phosphoenolpyruvate: step 3/7. In terms of biological role, catalyzes a trans-dehydration via an enolate intermediate. In Caldanaerobacter subterraneus subsp. tengcongensis (strain DSM 15242 / JCM 11007 / NBRC 100824 / MB4) (Thermoanaerobacter tengcongensis), this protein is 3-dehydroquinate dehydratase.